The chain runs to 211 residues: Endo-1,4-beta-xylanase A (211 aa).

An N-terminal signal peptide occupies residues 1–27 (MKVTAAFAGLLVTAFAAPVPEPVLVSR). The GH11 domain maps to 28-210 (SAGINYVQNY…GAGSASVTIS (183 aa)). Catalysis depends on glutamate 106, which acts as the Nucleophile. Cysteine 119 and cysteine 138 are oxidised to a cystine. Glutamate 197 (proton donor) is an active-site residue.

This sequence belongs to the glycosyl hydrolase 11 (cellulase G) family.

Its subcellular location is the secreted. The catalysed reaction is Endohydrolysis of (1-&gt;4)-beta-D-xylosidic linkages in xylans.. Its pathway is glycan degradation; xylan degradation. In terms of biological role, endo-1,4-beta-xylanase involved in the hydrolysis of xylan, a major structural heterogeneous polysaccharide found in plant biomass representing the second most abundant polysaccharide in the biosphere, after cellulose. This chain is Endo-1,4-beta-xylanase A (xynA), found in Aspergillus niger.